The primary structure comprises 236 residues: 7-cyano-7-deazaguanine synthase (236 aa).

7 to 17 lines the ATP pocket; the sequence is CSGGLDSVSLA. Positions 185, 193, 196, and 199 each coordinate Zn(2+).

The protein belongs to the QueC family. Zn(2+) is required as a cofactor.

It catalyses the reaction 7-carboxy-7-deazaguanine + NH4(+) + ATP = 7-cyano-7-deazaguanine + ADP + phosphate + H2O + H(+). The protein operates within purine metabolism; 7-cyano-7-deazaguanine biosynthesis. In terms of biological role, catalyzes the ATP-dependent conversion of 7-carboxy-7-deazaguanine (CDG) to 7-cyano-7-deazaguanine (preQ(0)). This chain is 7-cyano-7-deazaguanine synthase, found in Rhizobium etli (strain CIAT 652).